A 51-amino-acid polypeptide reads, in one-letter code: Insulin (51 aa).

3 disulfide bridges follow: cysteine 8-cysteine 37, cysteine 20-cysteine 50, and cysteine 36-cysteine 41.

It belongs to the insulin family. As to quaternary structure, heterodimer of a B chain and an A chain linked by two disulfide bonds.

The protein resides in the secreted. Functionally, insulin decreases blood glucose concentration. It increases cell permeability to monosaccharides, amino acids and fatty acids. It accelerates glycolysis, the pentose phosphate cycle, and glycogen synthesis in liver. The sequence is that of Insulin from Seriola quinqueradiata (Five-ray yellowtail).